A 91-amino-acid polypeptide reads, in one-letter code: Large ribosomal subunit protein uL22 (91 aa).

The protein belongs to the universal ribosomal protein uL22 family. As to quaternary structure, part of the 50S ribosomal subunit.

Functionally, this protein binds specifically to 23S rRNA; its binding is stimulated by other ribosomal proteins, e.g. L4, L17, and L20. It is important during the early stages of 50S assembly. It makes multiple contacts with different domains of the 23S rRNA in the assembled 50S subunit and ribosome. Its function is as follows. The globular domain of the protein is located near the polypeptide exit tunnel on the outside of the subunit, while an extended beta-hairpin is found that lines the wall of the exit tunnel in the center of the 70S ribosome. The sequence is that of Large ribosomal subunit protein uL22 (rplV) from Pigeon pea witches'-broom phytoplasma.